We begin with the raw amino-acid sequence, 209 residues long: MGLKYIKKAPNYTEIVLKAKIFSTLILMIVILFLINKMPSTYKKAYAVVLNNQIVGYVKDKTEAQNLLTQIKKEVEERHNTDSFILQSKLQLKSIEPGQYRETRVDELKNTIIEKGKVLVKRYAIFVNSKPYFVFENPQTPNNILNKLKKVYYNDKASQAKFLEKVEIKPVYVSPAIKVADEATALTKIMFGKDQVIEYTVKEGDTLWD.

This is an uncharacterized protein from Caldicellulosiruptor saccharolyticus (Caldocellum saccharolyticum).